Consider the following 247-residue polypeptide: Carboxy-S-adenosyl-L-methionine synthase (247 aa).

Residues Tyr40, 65 to 67 (GSS), 90 to 91 (DN), 122 to 123 (DI), Asn137, and Arg204 each bind S-adenosyl-L-methionine.

Belongs to the class I-like SAM-binding methyltransferase superfamily. Cx-SAM synthase family. As to quaternary structure, homodimer.

The enzyme catalyses prephenate + S-adenosyl-L-methionine = carboxy-S-adenosyl-L-methionine + 3-phenylpyruvate + H2O. Catalyzes the conversion of S-adenosyl-L-methionine (SAM) to carboxy-S-adenosyl-L-methionine (Cx-SAM). This is Carboxy-S-adenosyl-L-methionine synthase from Pseudomonas fluorescens (strain ATCC BAA-477 / NRRL B-23932 / Pf-5).